A 315-amino-acid polypeptide reads, in one-letter code: Methionyl-tRNA formyltransferase (315 aa).

A (6S)-5,6,7,8-tetrahydrofolate-binding site is contributed by 113–116; the sequence is SLLP.

This sequence belongs to the Fmt family.

The catalysed reaction is L-methionyl-tRNA(fMet) + (6R)-10-formyltetrahydrofolate = N-formyl-L-methionyl-tRNA(fMet) + (6S)-5,6,7,8-tetrahydrofolate + H(+). Attaches a formyl group to the free amino group of methionyl-tRNA(fMet). The formyl group appears to play a dual role in the initiator identity of N-formylmethionyl-tRNA by promoting its recognition by IF2 and preventing the misappropriation of this tRNA by the elongation apparatus. The polypeptide is Methionyl-tRNA formyltransferase (Klebsiella pneumoniae subsp. pneumoniae (strain ATCC 700721 / MGH 78578)).